Reading from the N-terminus, the 159-residue chain is Ribosomal RNA large subunit methyltransferase H (159 aa).

S-adenosyl-L-methionine is bound by residues L76, G107, and 126-131 (LSSLTL).

It belongs to the RNA methyltransferase RlmH family. In terms of assembly, homodimer.

It is found in the cytoplasm. The catalysed reaction is pseudouridine(1915) in 23S rRNA + S-adenosyl-L-methionine = N(3)-methylpseudouridine(1915) in 23S rRNA + S-adenosyl-L-homocysteine + H(+). Specifically methylates the pseudouridine at position 1915 (m3Psi1915) in 23S rRNA. The polypeptide is Ribosomal RNA large subunit methyltransferase H (Cupriavidus necator (strain ATCC 17699 / DSM 428 / KCTC 22496 / NCIMB 10442 / H16 / Stanier 337) (Ralstonia eutropha)).